The sequence spans 273 residues: MQSRRFHRLSRFRKNKRLLRERLRQRIFFRDRVVPEMMENPRVLVLTGAGISAESGIRTFRAADGLWEEHRVEDVATPEGFARNPGLVQTFYNARRQQLQQPEIQPNAAHLALAKLEEALGDRFLLVTQNIDNLHERAGNRNIIHMHGELLKVRCSQSGQILEWNGDVMPEDKCHCCQFPAPLRPHVVWFGEMPLGMDEIYMALSMADIFIAIGTSGHVYPAAGFVHEAKLHGAHTVELNLEPSQVGSEFEEKHYGPASQVVPEFVDKFLKGL.

One can recognise a Deacetylase sirtuin-type domain in the interval 20-272 (RERLRQRIFF…PEFVDKFLKG (253 aa)). Position 48 to 67 (48 to 67 (GAGISAESGIRTFRAADGLW)) interacts with NAD(+). Substrate is bound by residues tyrosine 92 and arginine 95. 129-132 (QNID) is an NAD(+) binding site. Histidine 147 functions as the Proton acceptor in the catalytic mechanism. Cysteine 155 and cysteine 174 together coordinate Zn(2+). Residues 214 to 216 (GTS), 240 to 242 (NLE), and alanine 258 contribute to the NAD(+) site.

Belongs to the sirtuin family. Class III subfamily. Zn(2+) is required as a cofactor.

It localises to the cytoplasm. It catalyses the reaction N(6)-acetyl-L-lysyl-[protein] + NAD(+) + H2O = 2''-O-acetyl-ADP-D-ribose + nicotinamide + L-lysyl-[protein]. It carries out the reaction N(6)-succinyl-L-lysyl-[protein] + NAD(+) + H2O = 2''-O-succinyl-ADP-D-ribose + nicotinamide + L-lysyl-[protein]. The enzyme catalyses N(6)-(2-hydroxyisobutanoyl)-L-lysyl-[protein] + NAD(+) + H2O = 2''-O-(2-hydroxyisobutanoyl)-ADP-D-ribose + nicotinamide + L-lysyl-[protein]. In terms of biological role, NAD-dependent lysine deacetylase that specifically removes acetyl groups on target proteins. Also acts as a protein-lysine deacylase by mediating protein desuccinylation and de-2-hydroxyisobutyrylation. Modulates the activities of several proteins which are inactive in their acylated form. The polypeptide is NAD-dependent protein deacylase (Salmonella typhi).